The following is a 446-amino-acid chain: MDLSESMEVDNGTTSENLKHVQITFFSKDKDLPEIPDAVFDVPTVAECDDLNLLLNKTIQATDDAWKEKKFEFLVGETFLRTSLAEFIEEYEVETETILKIECIIGIEAPKPLHDIQAPDWVSSVQVANGHTKSTNLFSIFSTTYGGDIVIVDRKGKETKLSVNSANRILKCSGIVRTTKKVQLEGTEFIVGGENQLLTLYEIEKGALVEKIVFRGHERAVECVSVNSDATRAISGSVDTNLKVWNLDPSDEATIYEKEEEESSAKKKRKKDTRTKVPMVTIGGHRDKVSSVVWCPWKSGHAFSCSWDHTVVQWDLELAGEVSRIKGPKSFTSIDIHPTSNLLISSCTDAIPRLYDPKNRDGAMVKQSFIGHQNGWVESVKWNPVDENQFVSVSTDKTAKMWDVRSSKSSLFDIHGHEDRILCAAWNEGLIATGSADCSIKIFETS.

Residues 21–105 (VQITFFSKDK…ETILKIECII (85 aa)) are ubiquitin-like (UBL) domain. WD repeat units follow at residues 171–211 (KCSG…LVEK) and 216–255 (GHER…EATI). The disordered stretch occupies residues 256-275 (YEKEEEESSAKKKRKKDTRT). WD repeat units follow at residues 284–324 (GHRD…EVSR), 326–365 (KGPK…GAMV), 371–412 (GHQN…SSLF), and 416–446 (GHED…FETS).

The protein belongs to the WD repeat WDR12/YTM1 family.

It is found in the nucleus. It localises to the nucleolus. The protein resides in the nucleoplasm. Its function is as follows. Required for maturation of ribosomal RNAs and formation of the large ribosomal subunit. This is Ribosome biogenesis protein WDR12 homolog from Caenorhabditis briggsae.